A 215-amino-acid polypeptide reads, in one-letter code: Ribose-5-phosphate isomerase A (215 aa).

Substrate contacts are provided by residues 26–29 (TGST), 79–82 (DGAD), and 92–95 (KGGG). The active-site Proton acceptor is Glu-101. Lys-119 contacts substrate.

Belongs to the ribose 5-phosphate isomerase family. Homodimer.

It catalyses the reaction aldehydo-D-ribose 5-phosphate = D-ribulose 5-phosphate. The protein operates within carbohydrate degradation; pentose phosphate pathway; D-ribose 5-phosphate from D-ribulose 5-phosphate (non-oxidative stage): step 1/1. In terms of biological role, catalyzes the reversible conversion of ribose-5-phosphate to ribulose 5-phosphate. The protein is Ribose-5-phosphate isomerase A of Xanthomonas oryzae pv. oryzae (strain MAFF 311018).